The sequence spans 582 residues: MITRMSELFLRTLRDDPADAEVASHKLLIRAGYIRPVAPGLYSWLPLGLRVLRNIERVIRDEMNAIGGQEILFPALLPRAPYETTNRWTQYGDSVFRLKDRRGNDYLLGPTHEELFTLTVKGEYSSYKDFPLTLYQIQTKYRDEARPRAGILRAREFVMKDSYSFDIDAAGLKAAYRAHREAYQRIFDRLQVRYVIVSAVSGAMGGSASEEFLAESPSGEDAFVRCLESGYTANVEAVVTARPDTLPIDGLPEAVVHDTGDTPTIASLVAWANEADLGRTVTAADTLKNVLIKVRQPGGDTELLAIGVPGDREVDDKRLGAALEPADYALLDDDDFAKHPFLVKGYIGPKALRENNVRYLVDPRIVDGTSWITGADQPGRHVVGLVAGRDFTADGTIEAAEVREGDPSPDGAGPLVMARGIEIGHIFQLGSKYTDAFTADVLGEDGKPVRLTMGSYGIGVSRLVAVVAEQHHDELGLRWPSTVAPFDVHLVIANKDAQARAGATALAADLDRLGVEVLLDDRQASPGVKFKDAELLGMPWIVVVGRGWADGVVELRDRFSGQTRELVAGASLATDIAAAVTG.

Belongs to the class-II aminoacyl-tRNA synthetase family. ProS type 1 subfamily. As to quaternary structure, homodimer.

It localises to the cytoplasm. It catalyses the reaction tRNA(Pro) + L-proline + ATP = L-prolyl-tRNA(Pro) + AMP + diphosphate. In terms of biological role, catalyzes the attachment of proline to tRNA(Pro) in a two-step reaction: proline is first activated by ATP to form Pro-AMP and then transferred to the acceptor end of tRNA(Pro). As ProRS can inadvertently accommodate and process non-cognate amino acids such as alanine and cysteine, to avoid such errors it has two additional distinct editing activities against alanine. One activity is designated as 'pretransfer' editing and involves the tRNA(Pro)-independent hydrolysis of activated Ala-AMP. The other activity is designated 'posttransfer' editing and involves deacylation of mischarged Ala-tRNA(Pro). The misacylated Cys-tRNA(Pro) is not edited by ProRS. This chain is Proline--tRNA ligase, found in Mycobacterium bovis (strain ATCC BAA-935 / AF2122/97).